A 202-amino-acid chain; its full sequence is Snake venom metalloproteinase Ac1 (202 aa).

Residues 6-202 enclose the Peptidase M12B domain; that stretch reads RYMEIVIVVD…ENPPCILNKP (197 aa). Ca(2+) contacts are provided by E9 and D93. Disulfide bonds link C117–C197 and C157–C181. H142 is a Zn(2+) binding site. Residue E143 is part of the active site. Positions 146 and 152 each coordinate Zn(2+). Positions 197 and 200 each coordinate Ca(2+).

The protein belongs to the venom metalloproteinase (M12B) family. P-I subfamily. In terms of assembly, monomer. Zn(2+) serves as cofactor. In terms of tissue distribution, expressed by the venom gland.

Its subcellular location is the secreted. Functionally, snake venom metalloproteinase that impairs hemostasis in the envenomed animal. The sequence is that of Snake venom metalloproteinase Ac1 from Deinagkistrodon acutus (Hundred-pace snake).